A 737-amino-acid polypeptide reads, in one-letter code: Delta and Notch-like epidermal growth factor-related receptor (737 aa).

The signal sequence occupies residues 1 to 34 (MQPRRAQAPGAQLLPALALLLLLLGAGPRGSSLA). At 35 to 640 (NPVPAAPLSA…LTNMPRHSLY (606 aa)) the chain is on the extracellular side. 2 EGF-like domains span residues 44-92 (APGP…ANCQ) and 94-133 (VADP…PNCE). Positions 44-133 (APGPCAAQPC…NEGYEGPNCE (90 aa)) are interaction with NOTCH1. 6 cysteine pairs are disulfide-bonded: C48–C59, C53–C80, C82–C91, C98–C108, C103–C121, and C123–C132. N223 is a glycosylation site (N-linked (GlcNAc...) asparagine). 5 EGF-like domains span residues 309 to 348 (PGES…TFCE), 349 to 390 (EYDA…ELCQ), 392 to 428 (KIDY…SACE), 430 to 466 (KVDP…PTCA), and 468 to 503 (LIDF…LYCE). 23 disulfide bridges follow: C319–C336, C338–C347, C353–C364, C358–C378, C380–C389, C396–C407, C401–C416, C418–C427, C434–C445, C439–C454, C456–C465, C472–C482, C477–C491, C493–C502, C509–C520, C514–C529, C531–C540, C547–C558, C552–C567, C569–C578, C585–C596, C590–C605, and C607–C616. Residues 505–541 (EYNECLSAPCLNAATCRDLVNGYECVCLAEYKGTHCE) form the EGF-like 8; calcium-binding domain. An EGF-like 9 domain is found at 543 to 579 (YKDPCANVSCLNGATCDSDGLNGTCICAPGFTGEECD). Residues 546-568 (PCANVSCLNGATCDSDGLNGTCI) enclose the Follistatin-like domain. The N-linked (GlcNAc...) asparagine glycan is linked to N564. An EGF-like 10; calcium-binding domain is found at 581-617 (DINECDSNPCHHGGSCLDQPNGYNCHCPHGWVGANCE). A helical transmembrane segment spans residues 641 to 661 (IIIGALCVAFILMLIILIVGI). The Cytoplasmic segment spans residues 662-737 (CRISRIEYQG…LVTLIKTKDL (76 aa)). The interaction with AP1G1 and somatodendritic targeting stretch occupies residues 677-680 (YEEF). Residue S685 is modified to Phosphoserine. Phosphotyrosine is present on residues Y711 and Y721. Position 722 is a phosphoserine (S722).

Interacts with AP1G1. Interacts with NOTCH1. As to expression, expressed in brain, spinal cord and adrenal gland.

The protein localises to the cell membrane. Activator of the NOTCH1 pathway. May mediate neuron-glia interaction during astrocytogenesis. The polypeptide is Delta and Notch-like epidermal growth factor-related receptor (DNER) (Homo sapiens (Human)).